Reading from the N-terminus, the 733-residue chain is Hypermethylated in cancer 1 protein (733 aa).

The region spanning 47–110 (CDVIIVVQNA…IYTGRLTDSV (64 aa)) is the BTB domain. Residues 154–315 (KYCHLRGGGS…PFRGSGGSPG (162 aa)) are mediates HDAC-dependent transcriptional repression. Position 159 is an omega-N-methylarginine (R159). Residues 189–209 (YSSPAGPPPPPAAEPPSGPDA) are disordered. The segment covering 193–206 (AGPPPPPAAEPPSG) has biased composition (pro residues). S237 is modified (phosphoserine). The interaction with CTBP1 stretch occupies residues 241–247 (GLDLSKK). The tract at residues 241–421 (GLDLSKKSPP…PGGHLEGYPC (181 aa)) is disordered. S248 carries the post-translational modification Phosphoserine. K333 bears the N6-acetyllysine; alternate mark. K333 is covalently cross-linked (Glycyl lysine isopeptide (Lys-Gly) (interchain with G-Cter in SUMO); alternate). Residues 344-361 (ELVRDRGSPGERLEERGG) show a composition bias toward basic and acidic residues. The residue at position 366 (S366) is a Phosphoserine. A compositionally biased stretch (pro residues) spans 368-380 (GGPPLGLVPPPRY). 5 C2H2-type zinc fingers span residues 437-464 (YVCI…EEEE), 507-534 (YRCA…LTRP), 535-562 (YPCT…GLKP), 563-590 (FACD…GEKP), and 591-618 (YECQ…VGGA). Residue S704 is modified to Phosphoserine.

The protein belongs to the krueppel C2H2-type zinc-finger protein family. Hic subfamily. Self-associates. Interacts with HIC2. Interacts with CTBP1 and CTBP2. Interacts with TCF7L2 and ARID1A. Interacts with MTA1 and MBD3; indicative for an association with the NuRD complex. Interacts with SIRT1. In terms of processing, acetylated on several residues, including Lys-333. Lys-333 is deacetylated by SIRT1. Sumoylated on Lys-333 by a PIAS family member, which enhances interaction with MTA1, positively regulates transcriptional repression activity and is enhanced by HDAC4. Ubiquitously expressed with highest levels in heart and lung.

It localises to the nucleus. Functionally, transcriptional repressor. Recognizes and binds to the consensus sequence '5-[CG]NG[CG]GGGCA[CA]CC-3'. May act as a tumor suppressor. Involved in development of head, face, limbs and ventral body wall. Involved in down-regulation of SIRT1 and thereby is involved in regulation of p53/TP53-dependent apoptotic DNA-damage responses. The specific target gene promoter association seems to be depend on corepressors, such as CTBP1 or CTBP2 and MTA1. In cooperation with MTA1 (indicative for an association with the NuRD complex) represses transcription from CCND1/cyclin-D1 and CDKN1C/p57Kip2 specifically in quiescent cells. Involved in regulation of the Wnt signaling pathway probably by association with TCF7L2 and preventing TCF7L2 and CTNNB1 association with promoters of TCF-responsive genes. Seems to repress transcription from E2F1 and ATOH1 which involves ARID1A, indicative for the participation of a distinct SWI/SNF-type chromatin-remodeling complex. Probably represses transcription from ACKR3, FGFBP1 and EFNA1. This Mus musculus (Mouse) protein is Hypermethylated in cancer 1 protein (Hic1).